The following is a 104-amino-acid chain: Protein E7 (104 aa).

Positions 1 to 49 (MRGNAPTLKDIILYDLPTCDPTTCDTPPVDLYCYEQFDTSDEDDEDDDQ) are E7 terminal domain. The LXCXE motif; interaction with host RB1 and TMEM173/STING signature appears at 31-35 (LYCYE). The segment at 64–100 (CTQCGRSVKLVVSSTGADIQQLHQMLLDTLGIVCPLC) is a zinc-finger region. The Nuclear export signal signature appears at 82 to 90 (IQQLHQMLL).

Belongs to the papillomaviridae E7 protein family. As to quaternary structure, homodimer. Homooligomer. Interacts with host RB1; this interaction induces dissociation of RB1-E2F1 complex thereby disrupting RB1 activity. Interacts with host EP300; this interaction represses EP300 transcriptional activity. Interacts with protein E2; this interaction inhibits E7 oncogenic activity. Interacts with host TMEM173/STING; this interaction impairs the ability of TMEM173/STING to sense cytosolic DNA and promote the production of type I interferon (IFN-alpha and IFN-beta). In terms of processing, highly phosphorylated.

The protein resides in the host cytoplasm. The protein localises to the host nucleus. In terms of biological role, plays a role in viral genome replication by driving entry of quiescent cells into the cell cycle. Stimulation of progression from G1 to S phase allows the virus to efficiently use the cellular DNA replicating machinery to achieve viral genome replication. E7 protein has both transforming and trans-activating activities. Induces the disassembly of the E2F1 transcription factor from RB1, with subsequent transcriptional activation of E2F1-regulated S-phase genes. Interferes with host histone deacetylation mediated by HDAC1 and HDAC2, leading to transcription activation. Also plays a role in the inhibition of both antiviral and antiproliferative functions of host interferon alpha. Interaction with host TMEM173/STING impairs the ability of TMEM173/STING to sense cytosolic DNA and promote the production of type I interferon (IFN-alpha and IFN-beta). This Homo sapiens (Human) protein is Protein E7.